The chain runs to 309 residues: Dioxygenase af480 (309 aa).

Residues H153, D155, and H228 each coordinate Fe cation.

It belongs to the PhyH family. The cofactor is Fe cation.

The enzyme catalyses 5-dehydro-6-demethoxyfumagillol + 2-oxoglutarate + O2 = 5-dehydro-6-demethoxy-6-hydroxyfumagillol + succinate + CO2. It participates in secondary metabolite biosynthesis; terpenoid biosynthesis. Functionally, dioxygenase; part of the gene cluster that mediates the biosynthesis of fumagillin, a meroterpenoid that has numerous biological activities including irreversible inhibition of human type 2 methionine aminopeptidase (METAP2). Within the pathway, the dioxygenase af480 acts as a 5-dehydro-6-demethoxyfumagillol dioxygenase that hydroylates 5-keto-demethoxyfumagillol at position C-6. The pathway begins with the conversion of farnesyl pyrophosphate (FPP) to beta-trans-bergamotene by the membrane-bound beta-trans-bergamotene synthase af520. The multifunctional cytochrome P450 monooxygenase af510 then converts beta-trans-bergamotene into 5-keto-demethoxyfumagillol via several oxydation steps. 5-keto-demethoxyfumagillol is then subjected to successive C-6 hydroxylation and O-methylation by the dioxygenase af480 and O-methyltransferase af390-400, respectively, to yield 5-keto-fumagillol, which is then stereoselectively reduced by the keto-reductase af490 to 5R-hydroxy-seco-sesquiterpene. The next step is the polyketide transferase af380-catalyzed transfer of a dodecapentaenoyl group synthesized by the polyketide synthase af370 onto 5R-hydroxy-seco-sesquiterpene which leads to the production of prefumagillin. Finally, oxidative cleavage by the monooxygenase af470 converts prefumagillin to fumagillin. This Aspergillus fumigatus (strain ATCC MYA-4609 / CBS 101355 / FGSC A1100 / Af293) (Neosartorya fumigata) protein is Dioxygenase af480.